The chain runs to 117 residues: Ribonuclease P protein component (117 aa).

It belongs to the RnpA family. As to quaternary structure, consists of a catalytic RNA component (M1 or rnpB) and a protein subunit.

It catalyses the reaction Endonucleolytic cleavage of RNA, removing 5'-extranucleotides from tRNA precursor.. Its function is as follows. RNaseP catalyzes the removal of the 5'-leader sequence from pre-tRNA to produce the mature 5'-terminus. It can also cleave other RNA substrates such as 4.5S RNA. The protein component plays an auxiliary but essential role in vivo by binding to the 5'-leader sequence and broadening the substrate specificity of the ribozyme. This chain is Ribonuclease P protein component, found in Thermotoga maritima (strain ATCC 43589 / DSM 3109 / JCM 10099 / NBRC 100826 / MSB8).